We begin with the raw amino-acid sequence, 166 residues long: MRLILLSGLLLLGTFLANGDETDPDGQVLNSLIETLMHLQREFANLKYAFLTVHKARSFGSGSERLYVSNKEIKNFEPLGDICSQAGGHIPSPQLENQNKAFANVLERHNKAAYLVVGDSANFTNWAAGQPNEADGTCVKADTHGSWHSASCDDNLLVVCEFYFIL.

A signal peptide spans 1 to 19 (MRLILLSGLLLLGTFLANG). Positions 46-161 (LKYAFLTVHK…CDDNLLVVCE (116 aa)) constitute a C-type lectin domain. Intrachain disulfides connect Cys-83–Cys-160 and Cys-138–Cys-152. An N-linked (GlcNAc...) asparagine glycan is attached at Asn-122.

It belongs to the alpha-type phospholipase A2 inhibitor family. Oligomer. Homotrimer; non-covalently linked. Post-translationally, glycosylated. The glycosylation has no role in the association of this PLI and PA2 enzyme. Expressed by the liver.

The protein localises to the secreted. Functionally, this phospholipase A2 inhibitor binds directly phospholipase A2 in the presence or absence of calcium. Has anti-enzymatic, anti-myotoxic, anti-edema inducing, anti-cytotoxic, anti-bactericidal, and anti-lethal properties against basic and acidic phospholipases A2 from Bothrops venoms. This chain is Phospholipase A2 myotoxin inhibitor protein, found in Bothrops moojeni (Lance-headed viper).